We begin with the raw amino-acid sequence, 229 residues long: Lipoprotein-releasing system ATP-binding protein LolD (229 aa).

The 221-residue stretch at 9 to 229 folds into the ABC transporter domain; that stretch reads LRLEQVARRY…TIREGQIVPA (221 aa). Residue 45–52 participates in ATP binding; it reads APSGTGKS.

Belongs to the ABC transporter superfamily. Lipoprotein translocase (TC 3.A.1.125) family. As to quaternary structure, the complex is composed of two ATP-binding proteins (LolD) and two transmembrane proteins (LolC and LolE).

It is found in the cell inner membrane. Functionally, part of the ABC transporter complex LolCDE involved in the translocation of mature outer membrane-directed lipoproteins, from the inner membrane to the periplasmic chaperone, LolA. Responsible for the formation of the LolA-lipoprotein complex in an ATP-dependent manner. The protein is Lipoprotein-releasing system ATP-binding protein LolD of Granulibacter bethesdensis (strain ATCC BAA-1260 / CGDNIH1).